The sequence spans 352 residues: F-box/kelch-repeat protein SKIP30 (352 aa).

Positions 9–55 (SGLLDGIPEAVALRCLAHVPLHLHPNLELVSRSWRAAIRSHELFRVR) constitute an F-box domain. Kelch repeat units lie at residues 57–109 (ELRS…TTAG), 110–167 (MLFV…VLQG), 168–215 (KIVV…LVVN), 243–293 (YGWP…MTSL), and 296–351 (EVLI…TQLT).

In terms of assembly, part of a SCF (ASK-cullin-F-box) protein ligase complex. Interacts with SKP1A/ASK1.

Its pathway is protein modification; protein ubiquitination. Component of SCF(ASK-cullin-F-box) E3 ubiquitin ligase complexes, which may mediate the ubiquitination and subsequent proteasomal degradation of target proteins. This is F-box/kelch-repeat protein SKIP30 (SKIP30) from Arabidopsis thaliana (Mouse-ear cress).